A 238-amino-acid chain; its full sequence is Flagellar L-ring protein (238 aa).

The first 16 residues, 1-16, serve as a signal peptide directing secretion; sequence MRKLILISLCIFFLAS. Cys-17 is lipidated: N-palmitoyl cysteine. Residue Cys-17 is the site of S-diacylglycerol cysteine attachment.

Belongs to the FlgH family. As to quaternary structure, the basal body constitutes a major portion of the flagellar organelle and consists of four rings (L,P,S, and M) mounted on a central rod.

The protein localises to the cell outer membrane. Its subcellular location is the bacterial flagellum basal body. In terms of biological role, assembles around the rod to form the L-ring and probably protects the motor/basal body from shearing forces during rotation. This chain is Flagellar L-ring protein, found in Thermodesulfovibrio yellowstonii (strain ATCC 51303 / DSM 11347 / YP87).